A 232-amino-acid polypeptide reads, in one-letter code: Glycerol-3-phosphate acyltransferase (232 aa).

6 consecutive transmembrane segments (helical) span residues 4–24, 56–76, 90–110, 124–144, 147–167, and 191–211; these read FLAI…IIAG, AVTL…VAFF, IALN…TVFA, MLIG…ILAI, TRYV…IIAI, and SLDY…IYTH.

The protein belongs to the PlsY family. As to quaternary structure, probably interacts with PlsX.

It is found in the cell inner membrane. The enzyme catalyses an acyl phosphate + sn-glycerol 3-phosphate = a 1-acyl-sn-glycero-3-phosphate + phosphate. It functions in the pathway lipid metabolism; phospholipid metabolism. Functionally, catalyzes the transfer of an acyl group from acyl-phosphate (acyl-PO(4)) to glycerol-3-phosphate (G3P) to form lysophosphatidic acid (LPA). This enzyme utilizes acyl-phosphate as fatty acyl donor, but not acyl-CoA or acyl-ACP. The sequence is that of Glycerol-3-phosphate acyltransferase from Chlorobaculum parvum (strain DSM 263 / NCIMB 8327) (Chlorobium vibrioforme subsp. thiosulfatophilum).